Here is a 394-residue protein sequence, read N- to C-terminus: Elongation factor Tu 1 (394 aa).

Residues 10–204 (KPHVNVGTIG…ALDSYIPEPE (195 aa)) enclose the tr-type G domain. Residues 19-26 (GHVDHGKT) form a G1 region. Position 19-26 (19-26 (GHVDHGKT)) interacts with GTP. Threonine 26 lines the Mg(2+) pocket. The interval 60–64 (GITIS) is G2. Residues 81–84 (DCPG) are G3. Residues 81–85 (DCPGH) and 136–139 (NKCD) contribute to the GTP site. Residues 136–139 (NKCD) form a G4 region. Residues 174 to 176 (SAL) are G5.

It belongs to the TRAFAC class translation factor GTPase superfamily. Classic translation factor GTPase family. EF-Tu/EF-1A subfamily. Monomer.

Its subcellular location is the cytoplasm. It carries out the reaction GTP + H2O = GDP + phosphate + H(+). Functionally, GTP hydrolase that promotes the GTP-dependent binding of aminoacyl-tRNA to the A-site of ribosomes during protein biosynthesis. The protein is Elongation factor Tu 1 of Photorhabdus laumondii subsp. laumondii (strain DSM 15139 / CIP 105565 / TT01) (Photorhabdus luminescens subsp. laumondii).